The following is a 67-amino-acid chain: Large ribosomal subunit protein bL31 (67 aa).

Zn(2+)-binding residues include cysteine 16, cysteine 18, cysteine 36, and cysteine 39.

It belongs to the bacterial ribosomal protein bL31 family. Type A subfamily. As to quaternary structure, part of the 50S ribosomal subunit. Requires Zn(2+) as cofactor.

Binds the 23S rRNA. This Treponema pallidum (strain Nichols) protein is Large ribosomal subunit protein bL31.